The primary structure comprises 392 residues: Galactokinase (392 aa).

Alpha-D-galactose is bound by residues Arg37, Glu43, His44, and Asp46. Positions 136, 138, 140, and 141 each coordinate ATP. Residue Asp186 coordinates alpha-D-galactose. The Proton acceptor role is filled by Asp186. Residue Ser230 is modified to Phosphoserine. Tyr236 contacts alpha-D-galactose.

This sequence belongs to the GHMP kinase family. GalK subfamily. In terms of assembly, homodimer.

The enzyme catalyses alpha-D-galactose + ATP = alpha-D-galactose 1-phosphate + ADP + H(+). It functions in the pathway carbohydrate metabolism; galactose metabolism. Functionally, catalyzes the transfer of a phosphate from ATP to alpha-D-galactose and participates in the first committed step in the catabolism of galactose. In Homo sapiens (Human), this protein is Galactokinase.